We begin with the raw amino-acid sequence, 740 residues long: Eukaryotic translation initiation factor 3 subunit B (740 aa).

The segment covering 1–10 (MAPSFDTLSE) has biased composition (polar residues). A disordered region spans residues 1–20 (MAPSFDTLSEQDLHEEEEEE). Residues 40–126 (TFVVIDGLPV…HTLLVNKLMD (87 aa)) form the RRM domain. WD repeat units lie at residues 193–230 (AHWT…KQKQ), 232–289 (PHPF…RSFV), 302–343 (EPKK…LLGK), 455–496 (SLKD…SFFA), 513–556 (IEKK…EKPE), and 571–609 (TEHY…HTFA). Residues 696–721 (AYGLPEEADDPKLAKDAAATTQEQGE) are disordered.

This sequence belongs to the eIF-3 subunit B family. In terms of assembly, component of the eukaryotic translation initiation factor 3 (eIF-3) complex.

It localises to the cytoplasm. Functionally, RNA-binding component of the eukaryotic translation initiation factor 3 (eIF-3) complex, which is involved in protein synthesis of a specialized repertoire of mRNAs and, together with other initiation factors, stimulates binding of mRNA and methionyl-tRNAi to the 40S ribosome. The eIF-3 complex specifically targets and initiates translation of a subset of mRNAs involved in cell proliferation. This Aspergillus fumigatus (strain ATCC MYA-4609 / CBS 101355 / FGSC A1100 / Af293) (Neosartorya fumigata) protein is Eukaryotic translation initiation factor 3 subunit B (prt1).